The following is a 77-amino-acid chain: Large ribosomal subunit protein eL14 (77 aa).

The protein belongs to the eukaryotic ribosomal protein eL14 family.

This is Large ribosomal subunit protein eL14 from Methanococcus maripaludis (strain C5 / ATCC BAA-1333).